Here is a 212-residue protein sequence, read N- to C-terminus: ATP phosphoribosyltransferase (212 aa).

It belongs to the ATP phosphoribosyltransferase family. Short subfamily. Heteromultimer composed of HisG and HisZ subunits.

The protein resides in the cytoplasm. It catalyses the reaction 1-(5-phospho-beta-D-ribosyl)-ATP + diphosphate = 5-phospho-alpha-D-ribose 1-diphosphate + ATP. The protein operates within amino-acid biosynthesis; L-histidine biosynthesis; L-histidine from 5-phospho-alpha-D-ribose 1-diphosphate: step 1/9. In terms of biological role, catalyzes the condensation of ATP and 5-phosphoribose 1-diphosphate to form N'-(5'-phosphoribosyl)-ATP (PR-ATP). Has a crucial role in the pathway because the rate of histidine biosynthesis seems to be controlled primarily by regulation of HisG enzymatic activity. This is ATP phosphoribosyltransferase from Albidiferax ferrireducens (strain ATCC BAA-621 / DSM 15236 / T118) (Rhodoferax ferrireducens).